The sequence spans 617 residues: Protein fem-1 homolog C (617 aa).

Position 1 is an N-acetylmethionine (Met-1). 7 ANK repeats span residues 2-31 (DLKT…KAEV), 40-70 (NGAT…SIEV), 82-111 (EGAP…SVNN), 115-144 (TNST…DLEV), 148-177 (HGHT…DVNR), 181-210 (KGNT…KMEK), and 213-242 (YGMT…TSKT). TPR repeat units lie at residues 245–279 (INAL…RYSD) and 338–371 (SYYI…QQSN). 2 ANK repeats span residues 481-523 (NNFS…DVNV) and 527-556 (DDNS…HFDA).

It belongs to the fem-1 family. In terms of assembly, component of a Cul2-RING (CRL2) E3 ubiquitin-protein ligase complex, also named ECS (Elongin BC-CUL2/5-SOCS-box protein) complex, composed of CUL2, Elongin BC (ELOB and ELOC), RBX1 and substrate-specific adapter FEM1C. Widely expressed. Expressed at higher level in testis.

It functions in the pathway protein modification; protein ubiquitination. Functionally, substrate-recognition component of a Cul2-RING (CRL2) E3 ubiquitin-protein ligase complex of the DesCEND (destruction via C-end degrons) pathway, which recognizes a C-degron located at the extreme C terminus of target proteins, leading to their ubiquitination and degradation. The C-degron recognized by the DesCEND pathway is usually a motif of less than ten residues and can be present in full-length proteins, truncated proteins or proteolytically cleaved forms. The CRL2(FEM1C) complex specifically recognizes proteins with an arginine at the C-terminus: recognizes and binds proteins ending with -Lys/Arg-Xaa-Arg and -Lys/Arg-Xaa-Xaa-Arg C-degrons, such as SIL1 or OR51B2, leading to their ubiquitination and degradation. The CRL2(FEM1C) complex mediates ubiquitination and degradation of truncated MSRB1/SEPX1 selenoproteins produced by failed UGA/Sec decoding. Promotes ubiquitination and degradation of SLBP. This Mus musculus (Mouse) protein is Protein fem-1 homolog C.